We begin with the raw amino-acid sequence, 265 residues long: Undecaprenyl-diphosphatase (265 aa).

A run of 8 helical transmembrane segments spans residues Ile7–Ser27, Thr45–His65, Leu86–Ile106, Leu108–Ile128, Ile145–Phe165, Ile186–Ile206, Ile214–Cys234, and Thr245–Asn265.

Belongs to the UppP family.

Its subcellular location is the cell membrane. The enzyme catalyses di-trans,octa-cis-undecaprenyl diphosphate + H2O = di-trans,octa-cis-undecaprenyl phosphate + phosphate + H(+). Its function is as follows. Catalyzes the dephosphorylation of undecaprenyl diphosphate (UPP). Confers resistance to bacitracin. The polypeptide is Undecaprenyl-diphosphatase (Buchnera aphidicola subsp. Acyrthosiphon pisum (strain Tuc7)).